We begin with the raw amino-acid sequence, 794 residues long: Lon protease (794 aa).

Positions 13-204 constitute a Lon N-terminal domain; it reads VPLYPLREII…KVYMHLTNEV (192 aa). 356-363 contributes to the ATP binding site; sequence GPPGVGKT. The 182-residue stretch at 592 to 773 folds into the Lon proteolytic domain; the sequence is KDRVGVATGL…REVFVQALNP (182 aa). Residues Ser-679 and Lys-722 contribute to the active site. A compositionally biased stretch (low complexity) spans 774–788; the sequence is TSPAPTAATSARTPA. The tract at residues 774-794 is disordered; the sequence is TSPAPTAATSARTPAGAPPPQ.

This sequence belongs to the peptidase S16 family. As to quaternary structure, homohexamer. Organized in a ring with a central cavity.

The protein localises to the cytoplasm. The catalysed reaction is Hydrolysis of proteins in presence of ATP.. ATP-dependent serine protease that mediates the selective degradation of mutant and abnormal proteins as well as certain short-lived regulatory proteins. Required for cellular homeostasis and for survival from DNA damage and developmental changes induced by stress. Degrades polypeptides processively to yield small peptide fragments that are 5 to 10 amino acids long. Binds to DNA in a double-stranded, site-specific manner. In Citrifermentans bemidjiense (strain ATCC BAA-1014 / DSM 16622 / JCM 12645 / Bem) (Geobacter bemidjiensis), this protein is Lon protease.